The sequence spans 508 residues: Immunoglobulin G-binding protein A (508 aa).

A signal peptide spans 1 to 36 (MKKKNIYSIRKLGVGIASVTLGTLLISGGVTPAANA). Positions 7-18 (YSIRKLGVGIAS) match the YSIRK-G/S signaling motif motif. The Immunoglobulin-binding region E repeat unit spans residues 37–92 (AQHDEAQQNAFYQVLNMPNLNADQRNGFIQSLKDDPSQSANVLGEAQKLNDSQAPK). One copy of the Immunoglobulin-binding region D repeat lies at 93-153 (ADAQQNKFNK…KKLNESQAPK (61 aa)). An Immunoglobulin-binding region A repeat occupies 154–211 (ADNNFNKEQQNAFYEILNMPNLNEEQRNGFIQSLKDDPSQSANLLAEAKKLNESQAPK). The stretch at 212 to 269 (ADNKFNKEQQNAFYEILHLPNLNEEQRNGFIQSLKDDPSQSANLLAEAKKLNDAQAPK) is one Immunoglobulin-binding region B repeat. Residues 270–327 (ADNKFNKEQQNAFYEILHLPNLTEEQRNGFIQSLKDDPSVSKEILAEAKKLNDAQAPK) form an Immunoglobulin-binding region C repeat. The segment covering 318–412 (KKLNDAQAPK…GNKPGKEDGN (95 aa)) has biased composition (basic and acidic residues). Disordered regions lie at residues 318-424 (KKLN…DTVN) and 459-479 (KKQP…ETGE). 12 repeat units span residues 333-340 (KPGKEDGN), 341-348 (KPGKEDGN), 349-356 (KPGKEDNK), 357-364 (KPGKEDGN), 365-372 (KPGKEDNK), 373-380 (KPGKEDGN), 381-388 (KPGKEDGN), 389-396 (KPGKEDGN), 397-405 (KPGKEDGNK), 406-413 (PGKEDGNG), 414-421 (VHVVKPGD), and 422-429 (TVNDIAKA). The tract at residues 333–408 (KPGKEDGNKP…GKEDGNKPGK (76 aa)) is 12 X 8 AA approximate tandem repeats. The region spanning 413 to 457 (GVHVVKPGDTVNDIAKANGTTADKIAADNKLADKNMIKPGQELVV) is the LysM domain. Residues 474 to 478 (LPETG) carry the LPXTG sorting signal motif. Threonine 477 carries the pentaglycyl murein peptidoglycan amidated threonine modification. Positions 478-508 (GEENPFIGTTVFGGLSLALGAALLAGRRREL) are cleaved as a propeptide — removed by sortase.

The protein belongs to the immunoglobulin-binding protein SpA family. Interacts with host TNFRSF1A; this interaction leads to the stimulation of both surface expression and shedding of TNFRSF1A.

The protein localises to the secreted. It localises to the cell wall. Functionally, plays a role in the inhibition of the host innate and adaptive immune responses. Possesses five immunoglobulin-binding domains that capture both the fragment crystallizable region (Fc region) and the Fab region (part of Ig that identifies antigen) of immunoglobulins. In turn, Staphylococcus aureus is protected from phagocytic killing via inhibition of Ig Fc region. In addition, the host elicited B-cell response is prevented due to a decrease of antibody-secreting cell proliferation that enter the bone marrow, thereby decreasing long-term antibody production. Inhibits osteogenesis by preventing osteoblast proliferation and expression of alkaline phosphatase, type I collagen, osteopontin and osteocalcin. Acts directly as a pro-inflammatory factor in the lung through its ability to bind and activate tumor necrosis factor alpha receptor 1/TNFRSF1A. The polypeptide is Immunoglobulin G-binding protein A (spa) (Staphylococcus aureus).